The primary structure comprises 267 residues: L-aspartate dehydrogenase (267 aa).

NAD(+)-binding residues include alanine 124 and asparagine 190. The active site involves histidine 218.

It belongs to the L-aspartate dehydrogenase family.

The catalysed reaction is L-aspartate + NADP(+) + H2O = oxaloacetate + NH4(+) + NADPH + H(+). It carries out the reaction L-aspartate + NAD(+) + H2O = oxaloacetate + NH4(+) + NADH + H(+). Its pathway is cofactor biosynthesis; NAD(+) biosynthesis; iminoaspartate from L-aspartate (dehydrogenase route): step 1/1. Its function is as follows. Specifically catalyzes the NAD or NADP-dependent dehydrogenation of L-aspartate to iminoaspartate. The polypeptide is L-aspartate dehydrogenase (Methanocaldococcus jannaschii (strain ATCC 43067 / DSM 2661 / JAL-1 / JCM 10045 / NBRC 100440) (Methanococcus jannaschii)).